Reading from the N-terminus, the 214-residue chain is Adenylate kinase (214 aa).

Residue 10–15 (GAGKGT) participates in ATP binding. An NMP region spans residues 30-59 (STGDMFRAAIKEGTELGKQAKALMDEGKLV). AMP contacts are provided by residues threonine 31, arginine 36, 57–59 (KLV), 85–88 (GFPR), and glutamine 92. Residues 122–159 (GRRVHQPSGRTYHVVYNPPKVEGKDDVTGEDLIIRQDD) are LID. ATP is bound by residues arginine 123 and 132 to 133 (TY). 2 residues coordinate AMP: arginine 156 and arginine 167. Residue lysine 200 participates in ATP binding.

It belongs to the adenylate kinase family. Monomer.

Its subcellular location is the cytoplasm. The enzyme catalyses AMP + ATP = 2 ADP. Its pathway is purine metabolism; AMP biosynthesis via salvage pathway; AMP from ADP: step 1/1. Its function is as follows. Catalyzes the reversible transfer of the terminal phosphate group between ATP and AMP. Plays an important role in cellular energy homeostasis and in adenine nucleotide metabolism. The polypeptide is Adenylate kinase (Actinobacillus pleuropneumoniae serotype 5b (strain L20)).